The following is a 487-amino-acid chain: Probable Xaa-Pro aminopeptidase MGYG_06974 (487 aa).

Mn(2+) contacts are provided by aspartate 255, aspartate 266, glutamate 414, and glutamate 458.

The protein belongs to the peptidase M24B family. Mn(2+) serves as cofactor.

It catalyses the reaction Release of any N-terminal amino acid, including proline, that is linked to proline, even from a dipeptide or tripeptide.. Its function is as follows. Catalyzes the removal of a penultimate prolyl residue from the N-termini of peptides. The sequence is that of Probable Xaa-Pro aminopeptidase MGYG_06974 from Arthroderma gypseum (strain ATCC MYA-4604 / CBS 118893) (Microsporum gypseum).